A 692-amino-acid polypeptide reads, in one-letter code: Elongation factor G (692 aa).

The tr-type G domain occupies 8-282 (ENTRNIGIMA…AVIDYLPSPL (275 aa)). Residues 17 to 24 (AHIDAGKT), 81 to 85 (DTPGH), and 135 to 138 (NKMD) contribute to the GTP site.

The protein belongs to the TRAFAC class translation factor GTPase superfamily. Classic translation factor GTPase family. EF-G/EF-2 subfamily.

The protein localises to the cytoplasm. Functionally, catalyzes the GTP-dependent ribosomal translocation step during translation elongation. During this step, the ribosome changes from the pre-translocational (PRE) to the post-translocational (POST) state as the newly formed A-site-bound peptidyl-tRNA and P-site-bound deacylated tRNA move to the P and E sites, respectively. Catalyzes the coordinated movement of the two tRNA molecules, the mRNA and conformational changes in the ribosome. The polypeptide is Elongation factor G (Bacillus mycoides (strain KBAB4) (Bacillus weihenstephanensis)).